A 1366-amino-acid chain; its full sequence is DNA-directed RNA polymerase subunit beta' (1366 aa).

Residues 1 to 20 (MTSSKPKKTSRVRKTTKNSK) are compositionally biased toward basic residues. Residues 1–37 (MTSSKPKKTSRVRKTTKNSKKNNPVTMPVLPKTPPSF) form a disordered region. Zn(2+) is bound by residues cysteine 248, cysteine 315, cysteine 322, and cysteine 325. Residues 1292 to 1366 (TVDMPQSPAV…LQEEGLLSDE (75 aa)) form a disordered region. Residues 1354–1366 (LEGLQEEGLLSDE) show a composition bias toward low complexity.

It belongs to the RNA polymerase beta' chain family. RpoC2 subfamily. In cyanobacteria the RNAP catalytic core is composed of 2 alpha, 1 beta, 1 beta', 1 gamma and 1 omega subunit. When a sigma factor is associated with the core the holoenzyme is formed, which can initiate transcription. Zn(2+) serves as cofactor.

The enzyme catalyses RNA(n) + a ribonucleoside 5'-triphosphate = RNA(n+1) + diphosphate. In terms of biological role, DNA-dependent RNA polymerase catalyzes the transcription of DNA into RNA using the four ribonucleoside triphosphates as substrates. This is DNA-directed RNA polymerase subunit beta' from Prochlorococcus marinus (strain MIT 9215).